Consider the following 174-residue polypeptide: Probable nicotinate-nucleotide adenylyltransferase (174 aa).

The protein belongs to the NadD family.

It catalyses the reaction nicotinate beta-D-ribonucleotide + ATP + H(+) = deamido-NAD(+) + diphosphate. Its pathway is cofactor biosynthesis; NAD(+) biosynthesis; deamido-NAD(+) from nicotinate D-ribonucleotide: step 1/1. Its function is as follows. Catalyzes the reversible adenylation of nicotinate mononucleotide (NaMN) to nicotinic acid adenine dinucleotide (NaAD). This chain is Probable nicotinate-nucleotide adenylyltransferase, found in Helicobacter pylori (strain HPAG1).